Here is a 298-residue protein sequence, read N- to C-terminus: MTDSHYIGRFAPSPSGELHFGSLIAALGSYLQARAQRGVWRVRIEDIDPPREVPGAAATILRQLEHYGLHWDGEVLWQSQRHEAYREALAWLHEQGLSYYCTCPRSRIQRLGGIYDGHCRTLCHGPENAAVRIKQQHPVMHFHDALRGDIQADPQLASEDFIIHRRDGLFAYNLAVVVDDHFQGVTEIVRGADLIEPTVRQLSLYKQFGWRAPGYVHLPLALNEQGAKLSKQNHAPALATGDPRPVLVQALRFLGQRDVVAWQEMSVEELLRFAVAHWRLTAVPTSANVNPAFSNASR.

Residues 9-13 and Glu45 contribute to the L-glutamate site; that span reads RFAPS. Positions 12 to 22 match the 'HIGH' region motif; that stretch reads PSPSGELHFGS. The Zn(2+) site is built by Cys101, Cys103, Tyr115, and Cys119. Tyr172 and Arg190 together coordinate L-glutamate. The 'KMSKS' region motif lies at 228-232; that stretch reads KLSKQ. Lys231 contributes to the ATP binding site.

This sequence belongs to the class-I aminoacyl-tRNA synthetase family. GluQ subfamily. Zn(2+) is required as a cofactor.

Its function is as follows. Catalyzes the tRNA-independent activation of glutamate in presence of ATP and the subsequent transfer of glutamate onto a tRNA(Asp). Glutamate is transferred on the 2-amino-5-(4,5-dihydroxy-2-cyclopenten-1-yl) moiety of the queuosine in the wobble position of the QUC anticodon. The sequence is that of Glutamyl-Q tRNA(Asp) synthetase from Salmonella typhi.